The chain runs to 863 residues: Disintegrin and metalloproteinase domain-containing protein 15 (863 aa).

Positions 1-17 (MRLALLWALGLLGAGSP) are cleaved as a signal peptide. Positions 18-206 (LPSWPLPNIG…LGQRHIRRRR (189 aa)) are excised as a propeptide. The segment at 22–45 (PLPNIGGTEEQQAESEKAPREPLE) is disordered. Residues 35 to 44 (ESEKAPREPL) are compositionally biased toward basic and acidic residues. The Cysteine switch signature appears at 177 to 184 (HTCALSWR). Cys179 lines the Zn(2+) pocket. At 207–696 (DVVTETKTVE…QLKATSSLTT (490 aa)) the chain is on the extracellular side. The 202-residue stretch at 213-414 (KTVELVIVAD…GMGSCLFERL (202 aa)) folds into the Peptidase M12B domain. N-linked (GlcNAc...) asparagine glycosylation occurs at Asn237. 4 disulfides stabilise this stretch: Cys323–Cys409, Cys365–Cys393, Cys367–Cys376, and Cys480–Cys500. Position 348 (His348) interacts with Zn(2+). Glu349 is a catalytic residue. The Zn(2+) site is built by His352 and His358. N-linked (GlcNAc...) asparagine glycosylation is found at Asn389 and Asn392. In terms of domain architecture, Disintegrin spans 421–508 (AAFCGNMFVE…QCPPDVSLGD (88 aa)). Residues 484-486 (RGD) carry the Cell attachment site motif. Asn606 and Asn611 each carry an N-linked (GlcNAc...) asparagine glycan. Cystine bridges form between Cys657-Cys667, Cys661-Cys673, and Cys675-Cys684. An EGF-like domain is found at 657–685 (CRSKCHGHGVCDSNRHCYCEEGWAPPDCT). Residues 697-717 (GLLLSLLVLLVLVMLGASYWY) form a helical membrane-spanning segment. Residues Tyr715 and Tyr735 each carry the phosphotyrosine; by HCK and LCK modification. The Cytoplasmic segment spans residues 718–863 (RARLHQRLCQ…PPPTVSSLYL (146 aa)). The disordered stretch occupies residues 736–863 (RAAQSGPSER…PPPTVSSLYL (128 aa)). Residues 767–778 (PAPPSRPLPPDP) are compositionally biased toward pro residues. The segment covering 779–789 (VSKRLQAELAD) has biased composition (basic and acidic residues). Pro residues-rich tracts occupy residues 791–800 (PNPPTRPLPA) and 813–824 (AKPPPPRKPLPA). 2 short sequence motifs (SH3-binding) span residues 815 to 821 (PPPPRKP) and 850 to 856 (RPAPPPP).

In terms of assembly, interacts with ITAGV-ITGB3 (vitronectin receptor). Interacts with SH3GL2 and SNX9; this interaction occurs preferentially with ADAM15 precursor, rather than the processed form, suggesting it occurs in a secretory pathway compartment prior to the medial Golgi. Interacts with ITAG9-ITGB1. Interacts specifically with Src family protein-tyrosine kinases (PTKs). Interacts with SH3PXD2A. Interacts with ITAGV-ITGB1. Interacts with GRB2, HCK, ITSN1, ITSN2, LYN, MAPK1, MAPK3, NCF1, NCK1, nephrocystin, PTK6, SNX33, LCK and SRC. Zn(2+) is required as a cofactor. The precursor is cleaved by a furin endopeptidase. Post-translationally, phosphorylation increases association with PTKs. Expressed in colon and small intestine. Expressed in airway smooth muscle and glomerular mesangial cells (at protein level). Ubiquitously expressed. Overexpressed in atherosclerotic lesions. Constitutively expressed in cultured endothelium and smooth muscle. Expressed in chondrocytes. Expressed in airway smooth muscle and glomerular mesangial cells.

The protein resides in the endomembrane system. It is found in the cell junction. Its subcellular location is the adherens junction. The protein localises to the cell projection. It localises to the cilium. The protein resides in the flagellum. It is found in the cytoplasmic vesicle. Its subcellular location is the secretory vesicle. The protein localises to the acrosome. Its activity is regulated as follows. Inhibited by hydroxamate-type metalloproteinase inhibitors such as marimastat. Inhibited by metalloproteinase inhibitor 2 (TIMP-2) and TIMP-3 at nanomolar concentrations. Not significantly inhibited by TIMP-1 at concentrations of up to 100 nM. Not activated by PMA or ionomycin. Its function is as follows. Active metalloproteinase with gelatinolytic and collagenolytic activity. Plays a role in the wound healing process. Mediates both heterotypic intraepithelial cell/T-cell interactions and homotypic T-cell aggregation. Inhibits beta-1 integrin-mediated cell adhesion and migration of airway smooth muscle cells. Suppresses cell motility on or towards fibronectin possibly by driving alpha-v/beta-1 integrin (ITAGV-ITGB1) cell surface expression via ERK1/2 inactivation. Cleaves E-cadherin in response to growth factor deprivation. Plays a role in glomerular cell migration. Plays a role in pathological neovascularization. May play a role in cartilage remodeling. May be proteolytically processed, during sperm epididymal maturation and the acrosome reaction. May play a role in sperm-egg binding through its disintegrin domain. This Homo sapiens (Human) protein is Disintegrin and metalloproteinase domain-containing protein 15 (ADAM15).